The primary structure comprises 237 residues: 2,3-bisphosphoglycerate-dependent phosphoglycerate mutase (237 aa).

Substrate contacts are provided by residues Arg-8–Asn-15, Thr-21–Gly-22, Arg-60, Glu-87–Tyr-90, Lys-98, Arg-114–Arg-115, and Gly-180–Asn-181. His-9 serves as the catalytic Tele-phosphohistidine intermediate. Glu-87 (proton donor/acceptor) is an active-site residue.

The protein belongs to the phosphoglycerate mutase family. BPG-dependent PGAM subfamily. In terms of assembly, homodimer.

The catalysed reaction is (2R)-2-phosphoglycerate = (2R)-3-phosphoglycerate. It participates in carbohydrate degradation; glycolysis; pyruvate from D-glyceraldehyde 3-phosphate: step 3/5. Functionally, catalyzes the interconversion of 2-phosphoglycerate and 3-phosphoglycerate. This chain is 2,3-bisphosphoglycerate-dependent phosphoglycerate mutase, found in Caulobacter vibrioides (strain ATCC 19089 / CIP 103742 / CB 15) (Caulobacter crescentus).